An 872-amino-acid polypeptide reads, in one-letter code: G-type lectin S-receptor-like serine/threonine-protein kinase At5g35370 (872 aa).

The first 26 residues, 1–26 (MKSTFLLLLLLLSLNLLFVFVSCASS), serve as a signal peptide directing secretion. Topologically, residues 27 to 443 (IEFVYPNFTA…NNNRGGSSFP (417 aa)) are extracellular. N-linked (GlcNAc...) asparagine glycosylation is found at asparagine 33, asparagine 148, and asparagine 239. The Bulb-type lectin domain occupies 35 to 156 (TASNLRFVDS…LNVSLWESFD (122 aa)). One can recognise an EGF-like; atypical domain in the interval 283-322 (PMDSCQIPFVCGKLGLCNLDNASENQSCSCPDEMRMDAGK). Cystine bridges form between cysteine 287/cysteine 299 and cysteine 293/cysteine 310. N-linked (GlcNAc...) asparagine glycans are attached at residues asparagine 303, asparagine 307, asparagine 342, asparagine 379, and asparagine 389. The region spanning 338-423 (CEARNISYLE…HDLIGYVKLS (86 aa)) is the PAN domain. 2 disulfides stabilise this stretch: cysteine 372-cysteine 394 and cysteine 376-cysteine 382. Residues 444–464 (VIALVLLPCSGFFLLIALGLL) form a helical membrane-spanning segment. Residues 465–872 (WWRRCAVMRY…IASQEVSGPR (408 aa)) are Cytoplasmic-facing. Residues 515 to 814 (ENFKMQIGSG…GSIPLGNPRM (300 aa)) form the Protein kinase domain. ATP contacts are provided by residues 521–529 (IGSGGFGSV) and lysine 543. Positions 603 to 620 (GNGPVLEWQERFDIALGT) are caM-binding. Residue aspartate 639 is the Proton acceptor of the active site. Residue serine 656 is modified to Phosphoserine. At threonine 673 the chain carries Phosphothreonine. Serine 716 and serine 859 each carry phosphoserine. A disordered region spans residues 836–872 (QNGESETMVFHRRESSNSGGSRQSASYIASQEVSGPR). Residues 851–861 (SNSGGSRQSAS) show a composition bias toward low complexity. Over residues 862-872 (YIASQEVSGPR) the composition is skewed to polar residues.

This sequence belongs to the protein kinase superfamily. Ser/Thr protein kinase family.

It is found in the cell membrane. The enzyme catalyses L-seryl-[protein] + ATP = O-phospho-L-seryl-[protein] + ADP + H(+). It carries out the reaction L-threonyl-[protein] + ATP = O-phospho-L-threonyl-[protein] + ADP + H(+). The chain is G-type lectin S-receptor-like serine/threonine-protein kinase At5g35370 from Arabidopsis thaliana (Mouse-ear cress).